We begin with the raw amino-acid sequence, 85 residues long: Putative membrane protein insertion efficiency factor (85 aa).

Belongs to the UPF0161 family.

It is found in the cell inner membrane. Functionally, could be involved in insertion of integral membrane proteins into the membrane. The chain is Putative membrane protein insertion efficiency factor from Vibrio cholerae serotype O1 (strain ATCC 39315 / El Tor Inaba N16961).